A 223-amino-acid polypeptide reads, in one-letter code: ATP synthase subunit a 1 (223 aa).

5 helical membrane-spanning segments follow: residues 20 to 40 (LTIA…AFAS), 78 to 98 (YLPY…CTII), 108 to 128 (LSTT…FGIA), 174 to 194 (MILA…MSVL), and 196 to 216 (LLTG…YISA).

This sequence belongs to the ATPase A chain family. As to quaternary structure, F-type ATPases have 2 components, CF(1) - the catalytic core - and CF(0) - the membrane proton channel. CF(1) has five subunits: alpha(3), beta(3), gamma(1), delta(1), epsilon(1). CF(0) has four main subunits: a, b, b' and c.

The protein localises to the cell inner membrane. Its function is as follows. Key component of the proton channel; it plays a direct role in the translocation of protons across the membrane. The polypeptide is ATP synthase subunit a 1 (Chlorobium luteolum (strain DSM 273 / BCRC 81028 / 2530) (Pelodictyon luteolum)).